The following is a 189-amino-acid chain: UPF0301 protein A1E_00140 (189 aa).

It belongs to the UPF0301 (AlgH) family.

This is UPF0301 protein A1E_00140 from Rickettsia canadensis (strain McKiel).